We begin with the raw amino-acid sequence, 239 residues long: 4-hydroxy-tetrahydrodipicolinate reductase (239 aa).

NAD(+) is bound by residues 9–14, 78–80, and 104–107; these read GINGKI, GTT, and APNF. The active-site Proton donor/acceptor is H134. H135 lines the (S)-2,3,4,5-tetrahydrodipicolinate pocket. Catalysis depends on K138, which acts as the Proton donor. Residue 144–145 coordinates (S)-2,3,4,5-tetrahydrodipicolinate; that stretch reads GT.

The protein belongs to the DapB family.

The protein localises to the cytoplasm. It catalyses the reaction (S)-2,3,4,5-tetrahydrodipicolinate + NAD(+) + H2O = (2S,4S)-4-hydroxy-2,3,4,5-tetrahydrodipicolinate + NADH + H(+). It carries out the reaction (S)-2,3,4,5-tetrahydrodipicolinate + NADP(+) + H2O = (2S,4S)-4-hydroxy-2,3,4,5-tetrahydrodipicolinate + NADPH + H(+). Its pathway is amino-acid biosynthesis; L-lysine biosynthesis via DAP pathway; (S)-tetrahydrodipicolinate from L-aspartate: step 4/4. Functionally, catalyzes the conversion of 4-hydroxy-tetrahydrodipicolinate (HTPA) to tetrahydrodipicolinate. The chain is 4-hydroxy-tetrahydrodipicolinate reductase from Coxiella burnetii (strain CbuG_Q212) (Coxiella burnetii (strain Q212)).